The chain runs to 417 residues: Serine hydroxymethyltransferase (417 aa).

(6S)-5,6,7,8-tetrahydrofolate contacts are provided by residues Leu120 and 124 to 126 (GHL). Residue Lys229 is modified to N6-(pyridoxal phosphate)lysine. 354 to 356 (SPF) is a binding site for (6S)-5,6,7,8-tetrahydrofolate.

It belongs to the SHMT family. Homodimer. Requires pyridoxal 5'-phosphate as cofactor.

It is found in the cytoplasm. The enzyme catalyses (6R)-5,10-methylene-5,6,7,8-tetrahydrofolate + glycine + H2O = (6S)-5,6,7,8-tetrahydrofolate + L-serine. Its pathway is one-carbon metabolism; tetrahydrofolate interconversion. It participates in amino-acid biosynthesis; glycine biosynthesis; glycine from L-serine: step 1/1. Functionally, catalyzes the reversible interconversion of serine and glycine with tetrahydrofolate (THF) serving as the one-carbon carrier. This reaction serves as the major source of one-carbon groups required for the biosynthesis of purines, thymidylate, methionine, and other important biomolecules. Also exhibits THF-independent aldolase activity toward beta-hydroxyamino acids, producing glycine and aldehydes, via a retro-aldol mechanism. The polypeptide is Serine hydroxymethyltransferase (Acinetobacter radioresistens).